The primary structure comprises 738 residues: Catalase-peroxidase (738 aa).

The first 24 residues, 1–24 (MEPLFPKRLLSIAVLCVASATAQA), serve as a signal peptide directing secretion. The tryptophyl-tyrosyl-methioninium (Trp-Tyr) (with M-252) cross-link spans 104 to 226 (WHAAGTYRMI…FGATEMGLIY (123 aa)). His105 serves as the catalytic Proton acceptor. Residues 191–213 (EEVNWGPEGQWLTDRRHSGDRKL) form a disordered region. Residues 203–213 (TDRRHSGDRKL) show a composition bias toward basic and acidic residues. A cross-link (tryptophyl-tyrosyl-methioninium (Tyr-Met) (with W-104)) is located at residues 226–252 (YVNPEGPHGNPDPIAAAHDIRQAFGRM). Position 267 (His267) interacts with heme b.

This sequence belongs to the peroxidase family. Peroxidase/catalase subfamily. In terms of assembly, homodimer or homotetramer. Heme b serves as cofactor. Formation of the three residue Trp-Tyr-Met cross-link is important for the catalase, but not the peroxidase activity of the enzyme.

It carries out the reaction H2O2 + AH2 = A + 2 H2O. The enzyme catalyses 2 H2O2 = O2 + 2 H2O. Bifunctional enzyme with both catalase and broad-spectrum peroxidase activity. The polypeptide is Catalase-peroxidase (Saccharophagus degradans (strain 2-40 / ATCC 43961 / DSM 17024)).